Here is a 363-residue protein sequence, read N- to C-terminus: Pyrimidine monooxygenase RutA (363 aa).

FMN-binding positions include 49–50, N115, E124, 140–141, and S190; these read IK and RY.

This sequence belongs to the NtaA/SnaA/DszA monooxygenase family. RutA subfamily.

The catalysed reaction is uracil + FMNH2 + NADH + O2 = (Z)-3-ureidoacrylate + FMN + NAD(+) + H2O + H(+). The enzyme catalyses thymine + FMNH2 + NADH + O2 = (Z)-2-methylureidoacrylate + FMN + NAD(+) + H2O + H(+). Catalyzes the pyrimidine ring opening between N-3 and C-4 by an unusual flavin hydroperoxide-catalyzed mechanism, adding oxygen atoms in the process to yield ureidoacrylate peracid, that immediately reacts with FMN forming ureidoacrylate and FMN-N(5)-oxide. The FMN-N(5)-oxide reacts spontaneously with NADH to produce FMN. Requires the flavin reductase RutF to regenerate FMN in vivo. The protein is Pyrimidine monooxygenase RutA of Escherichia coli O6:K15:H31 (strain 536 / UPEC).